Consider the following 113-residue polypeptide: MTDTHSIAQPFEAEVSPANNRQLTVSYASRYPDYSRIPAITLKGQWLEAAGFATGTAVVVKVMEGCIVLTAQPAAAEESELMQSLRQVCKLSARKQKQVQDFIGVITGKQKVA.

Residues 29-74 (SRYPDYSRIPAITLKGQWLEAAGFATGTAVVVKVMEGCIVLTAQPA) enclose the SpoVT-AbrB domain.

It belongs to the SymE family.

The protein localises to the cytoplasm. Involved in the degradation and recycling of damaged RNA. It is itself a target for degradation by the ATP-dependent protease Lon. The chain is Endoribonuclease SymE from Escherichia coli (strain ATCC 8739 / DSM 1576 / NBRC 3972 / NCIMB 8545 / WDCM 00012 / Crooks).